The chain runs to 178 residues: Crossover junction endodeoxyribonuclease RuvC (178 aa).

Active-site residues include aspartate 11, glutamate 71, and aspartate 143. Aspartate 11, glutamate 71, and aspartate 143 together coordinate Mg(2+).

Belongs to the RuvC family. In terms of assembly, homodimer which binds Holliday junction (HJ) DNA. The HJ becomes 2-fold symmetrical on binding to RuvC with unstacked arms; it has a different conformation from HJ DNA in complex with RuvA. In the full resolvosome a probable DNA-RuvA(4)-RuvB(12)-RuvC(2) complex forms which resolves the HJ. Mg(2+) serves as cofactor.

The protein resides in the cytoplasm. It carries out the reaction Endonucleolytic cleavage at a junction such as a reciprocal single-stranded crossover between two homologous DNA duplexes (Holliday junction).. In terms of biological role, the RuvA-RuvB-RuvC complex processes Holliday junction (HJ) DNA during genetic recombination and DNA repair. Endonuclease that resolves HJ intermediates. Cleaves cruciform DNA by making single-stranded nicks across the HJ at symmetrical positions within the homologous arms, yielding a 5'-phosphate and a 3'-hydroxyl group; requires a central core of homology in the junction. The consensus cleavage sequence is 5'-(A/T)TT(C/G)-3'. Cleavage occurs on the 3'-side of the TT dinucleotide at the point of strand exchange. HJ branch migration catalyzed by RuvA-RuvB allows RuvC to scan DNA until it finds its consensus sequence, where it cleaves and resolves the cruciform DNA. The polypeptide is Crossover junction endodeoxyribonuclease RuvC (Neisseria meningitidis serogroup A / serotype 4A (strain DSM 15465 / Z2491)).